The primary structure comprises 96 residues: Muconolactone Delta-isomerase (96 aa).

It belongs to the muconolactone Delta-isomerase family. In terms of assembly, homodecamer.

The enzyme catalyses (S)-muconolactone = (4,5-dihydro-5-oxofuran-2-yl)-acetate. Its pathway is aromatic compound metabolism; beta-ketoadipate pathway; 5-oxo-4,5-dihydro-2-furylacetate from catechol: step 3/3. The polypeptide is Muconolactone Delta-isomerase (catC) (Acinetobacter baylyi (strain ATCC 33305 / BD413 / ADP1)).